The primary structure comprises 585 residues: YTH domain-containing family protein 3 (585 aa).

3 disordered regions span residues 1-51 (MSAT…SYPP), 244-277 (KPAKPQPKLKPKGNVGIGGSAVPPPPIKHNMNIG), and 304-350 (PQPL…QPQL). Serine 2 is subject to N-acetylserine. Residues 15–24 (NKVSVQNGSI) are compositionally biased toward polar residues. Residue serine 23 is modified to Phosphoserine. Residues 244–254 (KPAKPQPKLKP) show a composition bias toward basic residues. The segment covering 329 to 350 (QQQQGPQPQAQPHQVQSQQPQL) has biased composition (low complexity). A YTH domain is found at 416 to 550 (GRVFIIKSYS…EKAKQVLKII (135 aa)). RNA-binding positions include 422–424 (KSY), aspartate 428, 438–439 (WC), asparagine 468, tryptophan 492, and tryptophan 497.

This sequence belongs to the YTHDF family. YTHDF3 subfamily. In terms of assembly, interacts with CNOT1; promoting recruitment of the CCR4-NOT complex. Interacts with YTHDF1. Interacts with YTHDF2. Interacts with PAN3.

It localises to the cytoplasm. It is found in the cytosol. Its subcellular location is the P-body. The protein localises to the stress granule. Its function is as follows. Specifically recognizes and binds N6-methyladenosine (m6A)-containing RNAs, and regulates their stability. M6A is a modification present at internal sites of mRNAs and some non-coding RNAs and plays a role in mRNA stability and processing. Acts as a regulator of mRNA stability by promoting degradation of m6A-containing mRNAs via interaction with the CCR4-NOT complex or PAN3. The YTHDF paralogs (YTHDF1, YTHDF2 and YTHDF3) share m6A-containing mRNAs targets and act redundantly to mediate mRNA degradation and cellular differentiation. Acts as a negative regulator of type I interferon response by down-regulating interferon-stimulated genes (ISGs) expression: acts by binding to FOXO3 mRNAs. Binds to FOXO3 mRNAs independently of METTL3-mediated m6A modification. Can also act as a regulator of mRNA stability in cooperation with YTHDF2 by binding to m6A-containing mRNA and promoting their degradation. Recognizes and binds m6A-containing circular RNAs (circRNAs); circRNAs are generated through back-splicing of pre-mRNAs, a non-canonical splicing process promoted by dsRNA structures across circularizing exons. Promotes formation of phase-separated membraneless compartments, such as P-bodies or stress granules, by undergoing liquid-liquid phase separation upon binding to mRNAs containing multiple m6A-modified residues: polymethylated mRNAs act as a multivalent scaffold for the binding of YTHDF proteins, juxtaposing their disordered regions and thereby leading to phase separation. The resulting mRNA-YTHDF complexes then partition into different endogenous phase-separated membraneless compartments, such as P-bodies, stress granules or neuronal RNA granules. May also recognize and bind N1-methyladenosine (m1A)-containing mRNAs: inhibits trophoblast invasion by binding to m1A-methylated transcripts of IGF1R, promoting their degradation. This is YTH domain-containing family protein 3 from Mus musculus (Mouse).